The following is a 277-amino-acid chain: Probable endonuclease 4 (277 aa).

Residues His67, His107, Glu141, Asp173, His176, His210, Asp223, His225, and Glu255 each contribute to the Zn(2+) site.

Belongs to the AP endonuclease 2 family. Zn(2+) serves as cofactor.

The catalysed reaction is Endonucleolytic cleavage to 5'-phosphooligonucleotide end-products.. Functionally, endonuclease IV plays a role in DNA repair. It cleaves phosphodiester bonds at apurinic or apyrimidinic (AP) sites, generating a 3'-hydroxyl group and a 5'-terminal sugar phosphate. The protein is Probable endonuclease 4 of Haloarcula marismortui (strain ATCC 43049 / DSM 3752 / JCM 8966 / VKM B-1809) (Halobacterium marismortui).